The chain runs to 334 residues: Holliday junction branch migration complex subunit RuvB (334 aa).

Positions 4 to 186 (ADRLIAPENP…FGITQRLEYY (183 aa)) are large ATPase domain (RuvB-L). Residues isoleucine 25, arginine 26, glycine 67, lysine 70, threonine 71, threonine 72, 133–135 (EDY), arginine 176, tyrosine 186, and arginine 223 each bind ATP. Threonine 71 provides a ligand contact to Mg(2+). A small ATPAse domain (RuvB-S) region spans residues 187–257 (KVQDLQNIVQ…VADKALNMLD (71 aa)). The tract at residues 260 to 334 (AQGFDYMDRK…RAYLHFGIEK (75 aa)) is head domain (RuvB-H). DNA-binding residues include arginine 315 and arginine 320.

Belongs to the RuvB family. In terms of assembly, homohexamer. Forms an RuvA(8)-RuvB(12)-Holliday junction (HJ) complex. HJ DNA is sandwiched between 2 RuvA tetramers; dsDNA enters through RuvA and exits via RuvB. An RuvB hexamer assembles on each DNA strand where it exits the tetramer. Each RuvB hexamer is contacted by two RuvA subunits (via domain III) on 2 adjacent RuvB subunits; this complex drives branch migration. In the full resolvosome a probable DNA-RuvA(4)-RuvB(12)-RuvC(2) complex forms which resolves the HJ.

The protein resides in the cytoplasm. The enzyme catalyses ATP + H2O = ADP + phosphate + H(+). In terms of biological role, the RuvA-RuvB-RuvC complex processes Holliday junction (HJ) DNA during genetic recombination and DNA repair, while the RuvA-RuvB complex plays an important role in the rescue of blocked DNA replication forks via replication fork reversal (RFR). RuvA specifically binds to HJ cruciform DNA, conferring on it an open structure. The RuvB hexamer acts as an ATP-dependent pump, pulling dsDNA into and through the RuvAB complex. RuvB forms 2 homohexamers on either side of HJ DNA bound by 1 or 2 RuvA tetramers; 4 subunits per hexamer contact DNA at a time. Coordinated motions by a converter formed by DNA-disengaged RuvB subunits stimulates ATP hydrolysis and nucleotide exchange. Immobilization of the converter enables RuvB to convert the ATP-contained energy into a lever motion, pulling 2 nucleotides of DNA out of the RuvA tetramer per ATP hydrolyzed, thus driving DNA branch migration. The RuvB motors rotate together with the DNA substrate, which together with the progressing nucleotide cycle form the mechanistic basis for DNA recombination by continuous HJ branch migration. Branch migration allows RuvC to scan DNA until it finds its consensus sequence, where it cleaves and resolves cruciform DNA. The sequence is that of Holliday junction branch migration complex subunit RuvB from Vibrio parahaemolyticus serotype O3:K6 (strain RIMD 2210633).